The primary structure comprises 277 residues: Undecaprenyl-diphosphatase (277 aa).

Transmembrane regions (helical) follow at residues 3–23, 44–64, 82–102, 109–129, 188–208, 218–238, and 249–269; these read IALL…EFLP, AKVF…LVYW, QFAL…LLFG, LFTP…ILWA, ATDF…VYSL, ADVP…WLCI, and SFIP…ATAW.

Belongs to the UppP family.

Its subcellular location is the cell inner membrane. It carries out the reaction di-trans,octa-cis-undecaprenyl diphosphate + H2O = di-trans,octa-cis-undecaprenyl phosphate + phosphate + H(+). Catalyzes the dephosphorylation of undecaprenyl diphosphate (UPP). Confers resistance to bacitracin. This is Undecaprenyl-diphosphatase from Polaromonas sp. (strain JS666 / ATCC BAA-500).